Reading from the N-terminus, the 1544-residue chain is Transcriptional activator GLI3 (1544 aa).

Polar residues-rich tracts occupy residues M1–T10 and N402–G429. Disordered regions lie at residues M1–A83 and S373–E477. Residues V463 to P476 are compositionally biased toward basic and acidic residues. Residues T482 to H509 form a C2H2-type 1 zinc finger. The C2H2-type 2; degenerate zinc finger occupies L520–H542. 3 C2H2-type zinc fingers span residues H548–H572, Y578–H603, and Y609–H634. Disordered stretches follow at residues D622–N728, R865–S919, S1126–S1155, and H1327–S1368. A compositionally biased stretch (basic and acidic residues) spans H634–P650. Residues S660–T685 show a composition bias toward polar residues. Positions S686 to K701 are enriched in basic and acidic residues. Polar residues predominate over residues P702–N728. Over residues R865–S882 the composition is skewed to low complexity. The span at G1330–Q1355 shows a compositional bias: polar residues.

It belongs to the GLI C2H2-type zinc-finger protein family. Phosphorylation is essential for its proteolytic processing. Post-translationally, the repressor form (GLI3R), a C-terminally truncated form is generated from the full-length GLI3 protein (GLI3FL) through proteolytic processing.

It is found in the nucleus. Its subcellular location is the cytoplasm. In terms of biological role, has a dual function as a transcriptional activator and a repressor of the sonic hedgehog (Shh) pathway, and plays a role in limb development. The full-length GLI3 form (GLI3FL) acts as an activator (GLI3A) while GLI3R, its C-terminally truncated form, acts as a repressor. The polypeptide is Transcriptional activator GLI3 (GLI3) (Gallus gallus (Chicken)).